Here is a 105-residue protein sequence, read N- to C-terminus: Large ribosomal subunit protein eL42 (105 aa).

Positions 23–52 (KVTQYKKGKESRLAQGRRRYDSKQKGFGGQ) are disordered. Residues 29–46 (KGKESRLAQGRRRYDSKQ) show a composition bias toward basic and acidic residues.

Belongs to the eukaryotic ribosomal protein eL42 family.

The sequence is that of Large ribosomal subunit protein eL42 (rpl-44) from Brugia malayi (Filarial nematode worm).